The chain runs to 150 residues: Ribosome maturation factor RimP (150 aa).

Belongs to the RimP family.

It is found in the cytoplasm. In terms of biological role, required for maturation of 30S ribosomal subunits. The protein is Ribosome maturation factor RimP of Thermotoga maritima (strain ATCC 43589 / DSM 3109 / JCM 10099 / NBRC 100826 / MSB8).